Here is a 397-residue protein sequence, read N- to C-terminus: MLKFEHVTKTYKGGKKAVNDLTLNIDKGEFVCFIGPSGCGKTTTMKMINRLIEPTEGKIFINDKDIMAEDPVKLRRSIGYVIQQIGLMPHMTIRENIVLVPKLLKWSEEKKQERAKELIKLVDLPEEFLDRYPYELSGGQQQRIGVLRALAAEQNLILMDEPFGALDPITRDSLQEEFKNLQKELGKTIIFVTHDMDEAIKLADRIVIMKDGEIVQFDTPDEILRNPANSFVEDFIGKDRLIEAKPDVTQVAQIMNTNPVSITADKSLQAAITVMKEKRVDTLLVVDEGNVLKGFIDVEQIDLNRRTATSVMDIIEKNVFYVYEDTLLRDTVQRILKRGYKYIPVVDKDKRLVGIVTRASLVDIVYDSIWGTLEDATENQEEQADSKTTEPEMKQEG.

The 235-residue stretch at 2-236 (LKFEHVTKTY…PANSFVEDFI (235 aa)) folds into the ABC transporter domain. An ATP-binding site is contributed by 35–42 (GPSGCGKT). CBS domains follow at residues 255–311 (MNTN…ATSV) and 315–373 (IEKN…WGTL). Positions 377–397 (TENQEEQADSKTTEPEMKQEG) are disordered. Residues 384 to 397 (ADSKTTEPEMKQEG) show a composition bias toward basic and acidic residues.

The protein belongs to the ABC transporter superfamily. In terms of assembly, the complex is composed of two ATP-binding proteins (OpuCA), two transmembrane proteins (OpuCB and OpuCD) and a solute-binding protein (OpuCC).

It catalyses the reaction a quaternary ammonium(out) + ATP + H2O = a quaternary ammonium(in) + ADP + phosphate + H(+). Functionally, part of the ABC transporter complex OpuCABCD involved in carnitine uptake. Probably responsible for energy coupling to the transport system. Involved, with BetL and GbuABC, in osmoprotection and cryoprotection of Listeria. Can also mediate weak glycine betaine transport. The sequence is that of Carnitine transport ATP-binding protein OpuCA (opuCA) from Listeria monocytogenes serotype 1/2a (strain 10403S).